The following is a 342-amino-acid chain: Probable dual-specificity RNA methyltransferase RlmN (342 aa).

The active-site Proton acceptor is the Glu91. In terms of domain architecture, Radical SAM core spans 97-327 (YKHGNSICVS…TTIRREMGAD (231 aa)). The cysteines at positions 104 and 332 are disulfide-linked. Cys111, Cys115, and Cys118 together coordinate [4Fe-4S] cluster. S-adenosyl-L-methionine-binding positions include 158–159 (GE), Ser190, 213–215 (SLH), and Asn289. Catalysis depends on Cys332, which acts as the S-methylcysteine intermediate.

The protein belongs to the radical SAM superfamily. RlmN family. The cofactor is [4Fe-4S] cluster.

It localises to the cytoplasm. It carries out the reaction adenosine(2503) in 23S rRNA + 2 reduced [2Fe-2S]-[ferredoxin] + 2 S-adenosyl-L-methionine = 2-methyladenosine(2503) in 23S rRNA + 5'-deoxyadenosine + L-methionine + 2 oxidized [2Fe-2S]-[ferredoxin] + S-adenosyl-L-homocysteine. It catalyses the reaction adenosine(37) in tRNA + 2 reduced [2Fe-2S]-[ferredoxin] + 2 S-adenosyl-L-methionine = 2-methyladenosine(37) in tRNA + 5'-deoxyadenosine + L-methionine + 2 oxidized [2Fe-2S]-[ferredoxin] + S-adenosyl-L-homocysteine. Functionally, specifically methylates position 2 of adenine 2503 in 23S rRNA and position 2 of adenine 37 in tRNAs. The chain is Probable dual-specificity RNA methyltransferase RlmN from Clostridium botulinum (strain Okra / Type B1).